The chain runs to 93 residues: UPF0358 protein YlaN (93 aa).

Belongs to the UPF0358 family.

Essential for cell growth and for normal cell shape. The protein is UPF0358 protein YlaN (ylaN) of Bacillus subtilis (strain 168).